The sequence spans 888 residues: MIITSPLLDYVTSHQDIKAINQWRADVEQQLQEFYENGYSIRDIVLARSNLIDEALTFLWKHAGLDQSDLGLFAVGGYGRREMLPYSDVDIMILSENDISPEHEKQISGFISSLWDVGNFKPGTSVRSIQNCVEQATNDLTVATTLIESRLITGNPDLAKWPRRIVSQTWTDKTFFDAKMEEQAKRHAQHNNTESNLEPDIKNAPGGIRDMNQIGWIAKRHFRVNRIYDLVHLGFITEYELKVLEEAESFLWEIRHHLHLLSKRDENRLLFDHQREIAAKFGYTRAEGQPVNFAVEQFMKRYYRTAQQVSTLNEMLLAYFNESVITPRLPNYERKIEEINENFKLVDGKLAVQHHKVFSENPSAILELFYLLANHPEIEGIRARTLRLLIMAAKRIDQEFRDNPAHQALFMAIIRSPYRLYDTLVDMKRYGILGNYIPAFGQIMGLMQYDLFHIYTVDAHTLLLIRNLNRFKEPEFAQHFPVVSSVFQRLARRDIVYLAAIFHDIAKGRGGDHSELGAEDAIEFCRAHGFTERECKLVAWLIHNHLLMSLTAQKKDISDPDVIKEFAEKLGDMEHLDYLYTLTVADINATNPKLWNTWRASLMRQLYTYSRDVIRSGLGRPVDYQMLIEDTKFSASETLVNEFSLDAVEKVWQELGDEYFLKESADEIAWHTRAILQHGDNPAPIVLLRAHRQSAQDAVQIFIYTQDKPNLFATTVAVLDRMNLDVQDARIITATKAFSLDTYVVLDRFGTLLTDPEREHTVKEALIKALSQSDKYPGLMQRRIPRQLRHFDIENTVDITLNPVLQQNMVEISTLDQPGLLARVGGLFMMQGLDIHSAKIATLGERAEDIFFVTKKDGQPMTTDEAHIFSAQLKLALDEASNQIVSQH.

Positions 1–338 (MIITSPLLDY…LPNYERKIEE (338 aa)) are uridylyltransferase. Positions 182-204 (EQAKRHAQHNNTESNLEPDIKNA) are disordered. Positions 339-699 (INENFKLVDG…AHRQSAQDAV (361 aa)) are uridylyl-removing. Positions 457–579 (VDAHTLLLIR…LGDMEHLDYL (123 aa)) constitute an HD domain. ACT domains follow at residues 700–781 (QIFI…GLMQ) and 809–887 (MVEI…IVSQ).

It belongs to the GlnD family. Mg(2+) is required as a cofactor.

The enzyme catalyses [protein-PII]-L-tyrosine + UTP = [protein-PII]-uridylyl-L-tyrosine + diphosphate. It carries out the reaction [protein-PII]-uridylyl-L-tyrosine + H2O = [protein-PII]-L-tyrosine + UMP + H(+). Uridylyltransferase (UTase) activity is inhibited by glutamine, while glutamine activates uridylyl-removing (UR) activity. Modifies, by uridylylation and deuridylylation, the PII regulatory proteins (GlnB and homologs), in response to the nitrogen status of the cell that GlnD senses through the glutamine level. Under low glutamine levels, catalyzes the conversion of the PII proteins and UTP to PII-UMP and PPi, while under higher glutamine levels, GlnD hydrolyzes PII-UMP to PII and UMP (deuridylylation). Thus, controls uridylylation state and activity of the PII proteins, and plays an important role in the regulation of nitrogen assimilation and metabolism. The chain is Bifunctional uridylyltransferase/uridylyl-removing enzyme from Acinetobacter baylyi (strain ATCC 33305 / BD413 / ADP1).